The following is a 456-amino-acid chain: MSNRPMSVVILAAGKGTRMYSDLPKVLHLLAGKPMVQHVIDAARELNAQRVNLVYGHGGELLKTALDDRSLNWVLQAEQLGTGHAMQQAAPYFADDEDILMLYGDVPLITGETLRRLQAVKPDGGIGLLTVNLANPTGYGRIIRENGRVVGIIEQKDAAPEQLAIGEINTGILLAGGADLKRWLSKLTNNNAQGEYYITDIIALAHQEGRQIEAVHPVRTTETDGVNNRLQLATLERVYQAEQAEKLLLSGVMLQDPARFDLRGTLEHGRDVVIDTNVIIEGHVKLGNRVKIGSGCVIKNSVIADDCIISPYSVIEDAQLAPDCSVGPFARLRPGSELAEGAHVGNFVEMKKARLGKGSKAGHLSYLGDAEIGANVNIGAGTITCNYDGVNKSKTIIGDDVFVGSDTQLIAPVSVAAGVTIAAGTTIMRNVPAAGLVYNRKEQQLNASWQRPQKKK.

Residues 1 to 229 (MSNRPMSVVI…TTETDGVNNR (229 aa)) form a pyrophosphorylase region. Residues 11–14 (LAAG), lysine 25, glutamine 76, 81–82 (GT), 103–105 (YGD), glycine 140, glutamate 154, asparagine 169, and asparagine 227 contribute to the UDP-N-acetyl-alpha-D-glucosamine site. Aspartate 105 provides a ligand contact to Mg(2+). Asparagine 227 lines the Mg(2+) pocket. Positions 230–250 (LQLATLERVYQAEQAEKLLLS) are linker. Positions 251–456 (GVMLQDPARF…ASWQRPQKKK (206 aa)) are N-acetyltransferase. The UDP-N-acetyl-alpha-D-glucosamine site is built by arginine 333 and lysine 351. Histidine 363 acts as the Proton acceptor in catalysis. Residues tyrosine 366 and asparagine 377 each contribute to the UDP-N-acetyl-alpha-D-glucosamine site. Acetyl-CoA is bound by residues alanine 380, 386–387 (NY), serine 405, alanine 423, and arginine 440.

This sequence in the N-terminal section; belongs to the N-acetylglucosamine-1-phosphate uridyltransferase family. The protein in the C-terminal section; belongs to the transferase hexapeptide repeat family. Homotrimer. Requires Mg(2+) as cofactor.

The protein localises to the cytoplasm. The catalysed reaction is alpha-D-glucosamine 1-phosphate + acetyl-CoA = N-acetyl-alpha-D-glucosamine 1-phosphate + CoA + H(+). It catalyses the reaction N-acetyl-alpha-D-glucosamine 1-phosphate + UTP + H(+) = UDP-N-acetyl-alpha-D-glucosamine + diphosphate. It participates in nucleotide-sugar biosynthesis; UDP-N-acetyl-alpha-D-glucosamine biosynthesis; N-acetyl-alpha-D-glucosamine 1-phosphate from alpha-D-glucosamine 6-phosphate (route II): step 2/2. It functions in the pathway nucleotide-sugar biosynthesis; UDP-N-acetyl-alpha-D-glucosamine biosynthesis; UDP-N-acetyl-alpha-D-glucosamine from N-acetyl-alpha-D-glucosamine 1-phosphate: step 1/1. The protein operates within bacterial outer membrane biogenesis; LPS lipid A biosynthesis. Catalyzes the last two sequential reactions in the de novo biosynthetic pathway for UDP-N-acetylglucosamine (UDP-GlcNAc). The C-terminal domain catalyzes the transfer of acetyl group from acetyl coenzyme A to glucosamine-1-phosphate (GlcN-1-P) to produce N-acetylglucosamine-1-phosphate (GlcNAc-1-P), which is converted into UDP-GlcNAc by the transfer of uridine 5-monophosphate (from uridine 5-triphosphate), a reaction catalyzed by the N-terminal domain. In Erwinia tasmaniensis (strain DSM 17950 / CFBP 7177 / CIP 109463 / NCPPB 4357 / Et1/99), this protein is Bifunctional protein GlmU.